The sequence spans 308 residues: UDP-3-O-acyl-N-acetylglucosamine deacetylase (308 aa).

The Zn(2+) site is built by H77, H233, and D237. H260 acts as the Proton donor in catalysis.

It belongs to the LpxC family. It depends on Zn(2+) as a cofactor.

The enzyme catalyses a UDP-3-O-[(3R)-3-hydroxyacyl]-N-acetyl-alpha-D-glucosamine + H2O = a UDP-3-O-[(3R)-3-hydroxyacyl]-alpha-D-glucosamine + acetate. Its pathway is glycolipid biosynthesis; lipid IV(A) biosynthesis; lipid IV(A) from (3R)-3-hydroxytetradecanoyl-[acyl-carrier-protein] and UDP-N-acetyl-alpha-D-glucosamine: step 2/6. Its function is as follows. Catalyzes the hydrolysis of UDP-3-O-myristoyl-N-acetylglucosamine to form UDP-3-O-myristoylglucosamine and acetate, the committed step in lipid A biosynthesis. This chain is UDP-3-O-acyl-N-acetylglucosamine deacetylase, found in Nitratidesulfovibrio vulgaris (strain ATCC 29579 / DSM 644 / CCUG 34227 / NCIMB 8303 / VKM B-1760 / Hildenborough) (Desulfovibrio vulgaris).